The chain runs to 384 residues: Putative F-box/kelch-repeat protein At3g27910 (384 aa).

The F-box domain maps to Ser-27 to Thr-79. Kelch repeat units follow at residues Lys-138–Gly-184, Lys-185–Lys-235, Ile-237–Asn-274, and Met-275–His-323.

In Arabidopsis thaliana (Mouse-ear cress), this protein is Putative F-box/kelch-repeat protein At3g27910.